Reading from the N-terminus, the 537-residue chain is Probable protein kinase UbiB (537 aa).

A helical membrane pass occupies residues 24 to 44; it reads LLFEQPLLPWWLASLRLLMPW. The 369-residue stretch at 126 to 494 folds into the Protein kinase domain; the sequence is RFDVEPLASA…RRRQGDNWAL (369 aa). ATP is bound by residues 132–140 and Lys-154; that span reads LASASVAQV. Catalysis depends on Asp-289, which acts as the Proton acceptor. The next 2 membrane-spanning stretches (helical) occupy residues 493–513 and 515–535; these read ALRL…AGAV and LSAP…YLIV.

The protein belongs to the ABC1 family. UbiB subfamily.

It localises to the cell inner membrane. It functions in the pathway cofactor biosynthesis; ubiquinone biosynthesis [regulation]. Functionally, is probably a protein kinase regulator of UbiI activity which is involved in aerobic coenzyme Q (ubiquinone) biosynthesis. This is Probable protein kinase UbiB from Pseudomonas entomophila (strain L48).